We begin with the raw amino-acid sequence, 73 residues long: UPF0346 protein SH1485 (73 aa).

The protein belongs to the UPF0346 family.

The sequence is that of UPF0346 protein SH1485 from Staphylococcus haemolyticus (strain JCSC1435).